A 184-amino-acid polypeptide reads, in one-letter code: Large ribosomal subunit protein uL5 (184 aa).

This sequence belongs to the universal ribosomal protein uL5 family. Part of the 50S ribosomal subunit; part of the 5S rRNA/L5/L18/L25 subcomplex. Contacts the 5S rRNA and the P site tRNA. Forms a bridge to the 30S subunit in the 70S ribosome.

This is one of the proteins that bind and probably mediate the attachment of the 5S RNA into the large ribosomal subunit, where it forms part of the central protuberance. In the 70S ribosome it contacts protein S13 of the 30S subunit (bridge B1b), connecting the 2 subunits; this bridge is implicated in subunit movement. Contacts the P site tRNA; the 5S rRNA and some of its associated proteins might help stabilize positioning of ribosome-bound tRNAs. The chain is Large ribosomal subunit protein uL5 from Fervidobacterium nodosum (strain ATCC 35602 / DSM 5306 / Rt17-B1).